The following is a 326-amino-acid chain: 4-hydroxythreonine-4-phosphate dehydrogenase (326 aa).

Substrate is bound by residues histidine 132 and threonine 133. The a divalent metal cation site is built by histidine 163, histidine 208, and histidine 263. 3 residues coordinate substrate: lysine 271, asparagine 280, and arginine 289.

It belongs to the PdxA family. As to quaternary structure, homodimer. The cofactor is Zn(2+). Requires Mg(2+) as cofactor. Co(2+) is required as a cofactor.

Its subcellular location is the cytoplasm. The enzyme catalyses 4-(phosphooxy)-L-threonine + NAD(+) = 3-amino-2-oxopropyl phosphate + CO2 + NADH. It participates in cofactor biosynthesis; pyridoxine 5'-phosphate biosynthesis; pyridoxine 5'-phosphate from D-erythrose 4-phosphate: step 4/5. In terms of biological role, catalyzes the NAD(P)-dependent oxidation of 4-(phosphooxy)-L-threonine (HTP) into 2-amino-3-oxo-4-(phosphooxy)butyric acid which spontaneously decarboxylates to form 3-amino-2-oxopropyl phosphate (AHAP). The protein is 4-hydroxythreonine-4-phosphate dehydrogenase of Roseobacter denitrificans (strain ATCC 33942 / OCh 114) (Erythrobacter sp. (strain OCh 114)).